The following is a 178-amino-acid chain: Killin (178 aa).

A DNA-binding region spans residues 8–50; that stretch reads SARPGRTVHVWGYRVEWKVRNGRKLQPSEWAGRGDLGGFKRRW.

The protein localises to the nucleus. Functionally, DNA-binding protein involved in S phase checkpoint control-coupled apoptosis by mediating p53/TP53-induced apoptosis. Has the ability to inhibit DNA synthesis and S phase arrest coupled to apoptosis. Has affinity to both double- and single-stranded DNA. This is Killin (KLLN) from Homo sapiens (Human).